Here is a 465-residue protein sequence, read N- to C-terminus: MAP kinase-interacting serine/threonine-protein kinase 1 (465 aa).

Over residues 1 to 11 (MVSSQKLEKPI) the composition is skewed to basic and acidic residues. Positions 1-40 (MVSSQKLEKPIEMGSSEPLPIADGDRRRKKKRRGRATDSL) are disordered. At Ser-39 the chain carries Phosphoserine. The Protein kinase domain maps to 49-374 (KLTSELLGEG…AAQVLQHPWV (326 aa)). ATP is bound by residues 55–63 (LGEGAYAKV) and Lys-78. A compositionally biased stretch (polar residues) spans 185–203 (APTSLGSSDPPTSASQVAG). The disordered stretch occupies residues 185–204 (APTSLGSSDPPTSASQVAGT). Catalysis depends on Asp-211, which acts as the Proton acceptor. Phosphoserine is present on residues Ser-221 and Ser-226. Residues Thr-250, Thr-255, and Thr-385 each carry the phosphothreonine modification. The segment at 446 to 465 (RRRALAQAGRGEDRSPPTAL) is disordered. Positions 455–465 (RGEDRSPPTAL) are enriched in basic and acidic residues. At Ser-460 the chain carries Phosphoserine.

Belongs to the protein kinase superfamily. CAMK Ser/Thr protein kinase family. Interacts with the C-terminal regions of EIF4G1 and EIF4G2. Also binds to dephosphorylated ERK1 and ERK2, and to the p38 kinases. Mg(2+) serves as cofactor. Post-translationally, dual phosphorylation of Thr-250 and Thr-255 activates the kinase. Phosphorylation of Thr-385 activates the kinase. MAPK3/ERK1 is one of the kinases which activate MKNK1/MNK1. Phosphorylation by PAK2 leads to a reduced phosphorylation of EIF4G1. Ubiquitous.

It localises to the cytoplasm. The protein localises to the nucleus. It carries out the reaction L-seryl-[protein] + ATP = O-phospho-L-seryl-[protein] + ADP + H(+). The enzyme catalyses L-threonyl-[protein] + ATP = O-phospho-L-threonyl-[protein] + ADP + H(+). Phosphorylated and activated by the p38 kinases and kinases in the Erk pathway. Its function is as follows. May play a role in the response to environmental stress and cytokines. Appears to regulate translation by phosphorylating EIF4E, thus increasing the affinity of this protein for the 7-methylguanosine-containing mRNA cap. In Homo sapiens (Human), this protein is MAP kinase-interacting serine/threonine-protein kinase 1 (MKNK1).